Reading from the N-terminus, the 105-residue chain is MRGMGNMQGMMKQMQKMQKEMAKAQADLEAQEFTGTAGGGMVTVKAIGKRVITDVVINEEVVDPEDIEMLQDLVLAATNDVLKQIEDTTSQTMGKFTQGLNLPGM.

Residues 1–16 (MRGMGNMQGMMKQMQK) show a composition bias toward low complexity. Positions 1–23 (MRGMGNMQGMMKQMQKMQKEMAK) are disordered.

Belongs to the YbaB/EbfC family. In terms of assembly, homodimer.

It is found in the cytoplasm. The protein resides in the nucleoid. Its function is as follows. Binds to DNA and alters its conformation. May be involved in regulation of gene expression, nucleoid organization and DNA protection. This chain is Nucleoid-associated protein lin2851, found in Listeria innocua serovar 6a (strain ATCC BAA-680 / CLIP 11262).